Consider the following 381-residue polypeptide: MAINIRKTHPLLKIMNHALVDLPAPSNISLWWNFGSHLGLCLIIQILTGLFLAMHYTADISMAFSSVVHICRDVNYGWLIRNIHANGASLFFICVYLHIARGLYYGSYLYKETWNIGVILLFLLMATAFVGYVLPWGQMSFWGATVITNLLSAFPYIGDMLVQWIWGGFSVDNATLTRFFAFHFLLPFLILALTVIHLLFLHETGSNNPLGINSDADKISFHPYFSYKDLLGFFVMIFFLAALALFMPNLLGDAENFIPANPLVTPPHIKPEWYFLFAYAILRSIPNKLGGVLALLFSIFILMLVPLLHTSKQRSTIFRPMTQILFWFLVANSIILTWIGGQPVEQPFIMVGQIASISYFSLFLIIMPFTSWWENKILSLN.

The next 4 membrane-spanning stretches (helical) occupy residues 34–54 (FGSH…FLAM), 78–99 (WLIR…YLHI), 114–134 (WNIG…GYVL), and 179–199 (FFAF…IHLL). Residues His84 and His98 each coordinate heme b. Residues His183 and His197 each contribute to the heme b site. His202 contacts a ubiquinone. 4 helical membrane passes run 227–247 (YKDL…ALFM), 289–309 (LGGV…PLLH), 321–341 (MTQI…WIGG), and 348–368 (FIMV…IIMP).

The protein belongs to the cytochrome b family. As to quaternary structure, the cytochrome bc1 complex contains 3 respiratory subunits (MT-CYB, CYC1 and UQCRFS1), 2 core proteins (UQCRC1 and UQCRC2) and probably 6 low-molecular weight proteins. Requires heme b as cofactor.

Its subcellular location is the mitochondrion inner membrane. Functionally, component of the ubiquinol-cytochrome c reductase complex (complex III or cytochrome b-c1 complex) that is part of the mitochondrial respiratory chain. The b-c1 complex mediates electron transfer from ubiquinol to cytochrome c. Contributes to the generation of a proton gradient across the mitochondrial membrane that is then used for ATP synthesis. The polypeptide is Cytochrome b (mt-cyb) (Carcharhinus porosus (Smalltail shark)).